A 707-amino-acid chain; its full sequence is Probable potassium transporter 17 (707 aa).

The segment at 1–25 (MDLEAGSIRPRSDGEGGGPAAGRET) is disordered. Residues 1-34 (MDLEAGSIRPRSDGEGGGPAAGRETDDSNVWKDL) are Cytoplasmic-facing. A helical membrane pass occupies residues 35–55 (FLAYKTLGVVFGGLVTSPLYV). At 56-71 (YPSMNLSSPTEADYLG) the chain is on the extracellular side. A glycan (N-linked (GlcNAc...) asparagine) is linked at Asn60. The helical transmembrane segment at 72-92 (IYSIMFWTLTLIGVVKYVCIA) threads the bilayer. The Cytoplasmic portion of the chain corresponds to 93-157 (LNADDHGEGG…FFEQSITARR (65 aa)). The chain crosses the membrane as a helical span at residues 158-178 (VLLFVAVLGMCMLIGDGILTP). The Extracellular portion of the chain corresponds to 179–194 (AISVLSAIDGIRGPFP). Residues 195 to 215 (TVSKPVVEALSAAILIGLFLL) form a helical membrane-spanning segment. The Cytoplasmic segment spans residues 216 to 222 (QKYGTSK). The chain crosses the membrane as a helical span at residues 223–243 (VSFLFSPIMAAWTFTTPIIGL). Over 244-276 (YSIVHYYPGIFKAISPYYIVHFFLRNKRQGWQL) the chain is Extracellular. A helical transmembrane segment spans residues 277–297 (LGGTVLCITGAEAMFADLGHF). The Cytoplasmic portion of the chain corresponds to 298 to 305 (SKKAIQIA). Residues 306–326 (FLSSIYPSLVLTYAGQTAYLI) traverse the membrane as a helical segment. The Extracellular portion of the chain corresponds to 327-343 (NNVNDFGDGFYKFVPRP). Residues 344–364 (VYWPMFVVATLAAIVASQSLI) form a helical membrane-spanning segment. The Cytoplasmic segment spans residues 365-402 (SATFSVIKQSVVLDYFPRVKVVHTSQHKEGEVYSPEIN). The helical transmembrane segment at 403-423 (YILMVLCVGVILGFGGGKAIG) threads the bilayer. The Extracellular portion of the chain corresponds to 424–427 (NAFG). A helical membrane pass occupies residues 428–448 (VVVIMVMLITTVLLTLVMIII). Over 449–454 (WRTPLV) the chain is Cytoplasmic. Residues 455–475 (LAGLYFVPFFIMEGAYVSAVF) form a helical membrane-spanning segment. Topologically, residues 476 to 480 (TKIPE) are extracellular. The chain crosses the membrane as a helical span at residues 481-501 (GGWLPFAVSITLAMIMFGWYY). The Cytoplasmic segment spans residues 502–707 (GRQRKFEYEM…RVEIGMLYKV (206 aa)).

Belongs to the HAK/KUP transporter (TC 2.A.72.3) family.

Its subcellular location is the membrane. High-affinity potassium transporter. The sequence is that of Probable potassium transporter 17 (HAK17) from Oryza sativa subsp. japonica (Rice).